Reading from the N-terminus, the 294-residue chain is ATP phosphoribosyltransferase (294 aa).

It belongs to the ATP phosphoribosyltransferase family. Long subfamily. Requires Mg(2+) as cofactor.

The protein resides in the cytoplasm. It catalyses the reaction 1-(5-phospho-beta-D-ribosyl)-ATP + diphosphate = 5-phospho-alpha-D-ribose 1-diphosphate + ATP. The protein operates within amino-acid biosynthesis; L-histidine biosynthesis; L-histidine from 5-phospho-alpha-D-ribose 1-diphosphate: step 1/9. Its activity is regulated as follows. Feedback inhibited by histidine. Functionally, catalyzes the condensation of ATP and 5-phosphoribose 1-diphosphate to form N'-(5'-phosphoribosyl)-ATP (PR-ATP). Has a crucial role in the pathway because the rate of histidine biosynthesis seems to be controlled primarily by regulation of HisG enzymatic activity. The polypeptide is ATP phosphoribosyltransferase (Prosthecochloris aestuarii (strain DSM 271 / SK 413)).